Here is a 272-residue protein sequence, read N- to C-terminus: ATP-dependent Clp protease proteolytic subunit, mitochondrial (272 aa).

Residues 1-52 (MWPRVLLGEARVAVDGCRALLSRLAVHFSPPWTAVSCSPLRRSLHGTATRAF) constitute a mitochondrion transit peptide. Ser149 (nucleophile) is an active-site residue. His174 is an active-site residue. Lys196 is subject to N6-succinyllysine. N6-acetyllysine is present on Lys207. Residues 240-272 (VLVHPPQDGEDEPELVQKETATAPTDPPAPTST) form a disordered region.

It belongs to the peptidase S14 family. As to quaternary structure, fourteen CLPP subunits assemble into 2 heptameric rings which stack back to back to give a disk-like structure with a central cavity. Component of the ClpXP complex formed by the assembly of two CLPP heptameric rings with two CLPX hexameric rings, giving rise to a symmetrical structure with two central CLPP rings flanked by a CLPX ring at either end of the complex. As to expression, detected in liver (at protein level). High levels found in heart, liver and skeletal muscle.

It is found in the mitochondrion matrix. It carries out the reaction Hydrolysis of proteins to small peptides in the presence of ATP and magnesium. alpha-casein is the usual test substrate. In the absence of ATP, only oligopeptides shorter than five residues are hydrolyzed (such as succinyl-Leu-Tyr-|-NHMec, and Leu-Tyr-Leu-|-Tyr-Trp, in which cleavage of the -Tyr-|-Leu- and -Tyr-|-Trp bonds also occurs).. Its function is as follows. Protease component of the ClpXP complex that cleaves peptides and various proteins in an ATP-dependent process. Has low peptidase activity in the absence of CLPX. The ClpXP complex can degrade CSN1S1, CSN2 and CSN3, as well as synthetic peptides (in vitro) and may be responsible for a fairly general and central housekeeping function rather than for the degradation of specific substrates. Cleaves PINK1 in the mitochondrion. In Mus musculus (Mouse), this protein is ATP-dependent Clp protease proteolytic subunit, mitochondrial.